Reading from the N-terminus, the 366-residue chain is MKMKLAVLPGDGIGPEVMDAAIRVLKTVLDNDGHEAVFENALIGGAAIDEAGTPLPEETLDICRRSDAILLGAVGGPKWDHNPASLRPEKGLLGLRKEMGLFANLRPVKAYATLLNASPLKRERVENVDLVIVRELTGGLYFGRPSERRGPGENEVVDTLAYTREEIERIIEKAFQLAQIRRKKLASVDKANVLESSRMWREIAEETAKKYPDVELSHMLVDSTSMQLIANPGQFDVIVTENMFGDILSDEASVITGSLGMLPSASLRSDRFGMYEPVHGSAPDIAGQGKANPLGTVLSAALMLRYSFGLEKEAAAIEKAVDDVLQDGYCTGDLQVANGKVVSTIELTDRLIEKLNNSAARPRIFQ.

76–89 serves as a coordination point for NAD(+); it reads GPKWDHNPASLRPE. Substrate-binding residues include R96, R106, R134, and D222. The Mg(2+) site is built by D222, D246, and D250. 280 to 292 provides a ligand contact to NAD(+); that stretch reads GSAPDIAGQGKAN.

It belongs to the isocitrate and isopropylmalate dehydrogenases family. LeuB type 1 subfamily. Homodimer. Mg(2+) serves as cofactor. Requires Mn(2+) as cofactor.

The protein localises to the cytoplasm. The enzyme catalyses (2R,3S)-3-isopropylmalate + NAD(+) = 4-methyl-2-oxopentanoate + CO2 + NADH. The protein operates within amino-acid biosynthesis; L-leucine biosynthesis; L-leucine from 3-methyl-2-oxobutanoate: step 3/4. In terms of biological role, catalyzes the oxidation of 3-carboxy-2-hydroxy-4-methylpentanoate (3-isopropylmalate) to 3-carboxy-4-methyl-2-oxopentanoate. The product decarboxylates to 4-methyl-2 oxopentanoate. This Heyndrickxia coagulans (Weizmannia coagulans) protein is 3-isopropylmalate dehydrogenase (leuB).